The chain runs to 159 residues: Urease accessory protein UreE (159 aa).

It belongs to the UreE family.

The protein resides in the cytoplasm. Involved in urease metallocenter assembly. Binds nickel. Probably functions as a nickel donor during metallocenter assembly. The polypeptide is Urease accessory protein UreE (Acinetobacter baylyi (strain ATCC 33305 / BD413 / ADP1)).